We begin with the raw amino-acid sequence, 260 residues long: Magnesium dechelatase SGRL, chloroplastic (260 aa).

A chloroplast-targeting transit peptide spans 1 to 45 (MACYIVPYYHHPVLSHPNREIFSHRHHHHHRFCNNLLNRRISVPR).

The protein belongs to the staygreen family. In terms of assembly, interacts with the light harvesting complex II (LHCII). Interacts with the chlorophyll catabolic enzymes (CCEs) NYC1, NOL, PAO and RCCR. In terms of tissue distribution, expressed in cotyledons, pollen and young leaves.

The protein localises to the plastid. Its subcellular location is the chloroplast thylakoid. It catalyses the reaction chlorophyllide a + 2 H(+) = pheophorbide a + Mg(2+). Its function is as follows. Magnesium chelatase involved in chlorophyll a degradation in the chlorophyll-protein complexes of photosystem I (PSI) and photosystem II (PSII). Contributes to the degradation of PSI and PSII in the thylakoid membranes. Recombinant SGRL possesses high dechelating activity against chlorophyllide a, very low activity against chlorophyll a, and no activity against chlorophyll b. Contributes to abiotic stress-induced chlorophyll degradation and leaf yellowing during vegetative plant growth. This is Magnesium dechelatase SGRL, chloroplastic from Arabidopsis thaliana (Mouse-ear cress).